The chain runs to 419 residues: UDP-N-acetylglucosamine 1-carboxyvinyltransferase (419 aa).

Residue 22-23 (KN) participates in phosphoenolpyruvate binding. Arginine 93 provides a ligand contact to UDP-N-acetyl-alpha-D-glucosamine. Cysteine 117 (proton donor) is an active-site residue. 2-(S-cysteinyl)pyruvic acid O-phosphothioketal is present on cysteine 117. 2 residues coordinate UDP-N-acetyl-alpha-D-glucosamine: aspartate 306 and isoleucine 328.

It belongs to the EPSP synthase family. MurA subfamily.

The protein resides in the cytoplasm. The enzyme catalyses phosphoenolpyruvate + UDP-N-acetyl-alpha-D-glucosamine = UDP-N-acetyl-3-O-(1-carboxyvinyl)-alpha-D-glucosamine + phosphate. Its pathway is cell wall biogenesis; peptidoglycan biosynthesis. In terms of biological role, cell wall formation. Adds enolpyruvyl to UDP-N-acetylglucosamine. In Vesicomyosocius okutanii subsp. Calyptogena okutanii (strain HA), this protein is UDP-N-acetylglucosamine 1-carboxyvinyltransferase.